Consider the following 238-residue polypeptide: Dolichyldiphosphatase 1 (238 aa).

Transmembrane regions (helical) follow at residues 33–53, 100–120, 130–150, and 162–182; these read LAYL…LIIF, PSSH…FLYL, FLDL…AFLV, and WSQV…WFIF.

This sequence belongs to the dolichyldiphosphatase family.

The protein resides in the endoplasmic reticulum membrane. The enzyme catalyses a di-trans,poly-cis-dolichyl diphosphate + H2O = a di-trans,poly-cis-dolichyl phosphate + phosphate + H(+). Its pathway is protein modification; protein glycosylation. Its function is as follows. Required for efficient N-glycosylation. Necessary for maintaining optimal levels of dolichol-linked oligosaccharides. Hydrolyzes dolichyl pyrophosphate at a very high rate and dolichyl monophosphate at a much lower rate. Does not act on phosphatidate. This chain is Dolichyldiphosphatase 1 (DOLPP1), found in Homo sapiens (Human).